Here is a 259-residue protein sequence, read N- to C-terminus: MSLAVATPASARLSPLTTSSPEPCRRRRLLLSAAAPLRRTRLRRRIAVVASVPDPAARPAEYTPWLIAGLGNPGSKYHGTRHNVGFEMVDRIARDEGITMNTIQSKSLLGIGSIGEVPVLLVKPQSYINYSGEAIGPLAAYYQVPLRHILVMYDEMSLPNGVLRLQRKGGHGRHNGLQNVMECLDSSRELPRLSIGIGSPPGKMDTRAFLLQKFSSEERLQIDTALEQGVDAVRTLVLKGFSGSIERFNLVQKYKFHSV.

The interval 1-21 (MSLAVATPASARLSPLTTSSP) is disordered. Residues 1-49 (MSLAVATPASARLSPLTTSSPEPCRRRRLLLSAAAPLRRTRLRRRIAVV) constitute a chloroplast transit peptide. Y77 is a binding site for tRNA. H82 acts as the Proton acceptor in catalysis. Residues Y127, N129, and N175 each coordinate tRNA.

It belongs to the PTH family. CRS2 subfamily. Part of large ribonucleo-protein complexes that include group IIB introns and either CAF1 or CAF2.

The protein localises to the plastid. Its subcellular location is the chloroplast stroma. Its function is as follows. Required for the splicing of group IIB introns in chloroplasts. In Oryza sativa subsp. japonica (Rice), this protein is Chloroplastic group IIB intron splicing facilitator CRS2, chloroplastic.